A 370-amino-acid polypeptide reads, in one-letter code: Putative F-box/kelch-repeat protein At3g46050 (370 aa).

An F-box domain is found at Pro15–Arg61. Kelch repeat units follow at residues Lys119–Asp165 and Ile167–Ser212.

The polypeptide is Putative F-box/kelch-repeat protein At3g46050 (Arabidopsis thaliana (Mouse-ear cress)).